Here is a 673-residue protein sequence, read N- to C-terminus: Transcription initiation factor IIB (673 aa).

The TFIIB-type zinc-finger motif lies at 38–69 (EEIVCPICGSKEVVKDYERAEIVCAKCGCVIK). Zn(2+) is bound by residues Cys-42, Cys-45, Cys-61, and Cys-64. Residues 238 to 357 (ILGYIIAEGY…VIFLLLQIKE (120 aa)) enclose the DOD-type homing endonuclease domain. 2 tandem repeats follow at residues 490–573 (SELD…AREL) and 584–665 (DYVP…ELTE).

The protein belongs to the TFIIB family. This protein undergoes a protein self splicing that involves a post-translational excision of the intervening region (intein) followed by peptide ligation.

Functionally, stabilizes TBP binding to an archaeal box-A promoter. Also responsible for recruiting RNA polymerase II to the pre-initiation complex (DNA-TBP-TFIIB). In Methanocaldococcus jannaschii (strain ATCC 43067 / DSM 2661 / JAL-1 / JCM 10045 / NBRC 100440) (Methanococcus jannaschii), this protein is Transcription initiation factor IIB (tfb).